A 907-amino-acid chain; its full sequence is Translation initiation factor IF-2 (907 aa).

The tract at residues 1–305 (MSEGNDQDQG…SLASVRRQRE (305 aa)) is disordered. Residues 62 to 80 (SGSGSSGGGRAGGRGGSGG) show a composition bias toward gly residues. Composition is skewed to basic and acidic residues over residues 93-114 (RVLEEQRAEAVRREQERREQEK) and 122-158 (EEARRRDEEARRAAEDEVREKEEAAARAREEEAERRA). Residues 211-230 (PARPVTPSRPATPAATPQAP) show a composition bias toward low complexity. Basic and acidic residues-rich tracts occupy residues 240–249 (RVGEAEDDRR) and 271–280 (KGGDSRRSGR). The tr-type G domain occupies 406 to 576 (PRPPVVTVMG…LLQAEMLDLR (171 aa)). Residues 415 to 422 (GHVDHGKT) are G1. 415–422 (GHVDHGKT) provides a ligand contact to GTP. The G2 stretch occupies residues 440 to 444 (GITQH). Positions 462 to 465 (DTPG) are G3. GTP is bound by residues 462-466 (DTPGH) and 516-519 (NKCD). Residues 516–519 (NKCD) form a G4 region. A G5 region spans residues 552–554 (SAL).

The protein belongs to the TRAFAC class translation factor GTPase superfamily. Classic translation factor GTPase family. IF-2 subfamily.

The protein resides in the cytoplasm. In terms of biological role, one of the essential components for the initiation of protein synthesis. Protects formylmethionyl-tRNA from spontaneous hydrolysis and promotes its binding to the 30S ribosomal subunits. Also involved in the hydrolysis of GTP during the formation of the 70S ribosomal complex. This Gluconacetobacter diazotrophicus (strain ATCC 49037 / DSM 5601 / CCUG 37298 / CIP 103539 / LMG 7603 / PAl5) protein is Translation initiation factor IF-2.